A 337-amino-acid chain; its full sequence is Nucleotide sugar transporter SLC35D2 (337 aa).

Over 1–27 the chain is Cytoplasmic; the sequence is MTAGGQAEAEGAGGEPGAARLPSRVAR. Residues 28-48 form a helical membrane-spanning segment; the sequence is LLSALFYGTCSFLIVLVNKAL. The Extracellular segment spans residues 49 to 53; it reads LTTYG. A helical transmembrane segment spans residues 54–74; that stretch reads FPSPIFLGIGQMAATIMILYV. Topologically, residues 75–146 are cytoplasmic; sequence SKLNKIIHFP…IILGKQYSLN (72 aa). The next 2 membrane-spanning stretches (helical) occupy residues 147–167 and 168–188; these read IILSVFAIILGAFIAAGSDLA and FNLEGYIFVFLNDIFTAANGV. The Cytoplasmic portion of the chain corresponds to 189–201; that stretch reads YTKQKMDPKELGK. A helical transmembrane segment spans residues 202–222; it reads YGVLFYNACFMIIPTLIISVS. The Extracellular segment spans residues 223–237; the sequence is TGDLQQATEFNQWKN. Residues 238 to 258 form a helical membrane-spanning segment; it reads VVFILQFLLSCFLGFLLMYST. Residues 259 to 265 are Cytoplasmic-facing; it reads VLCSYYN. The helical transmembrane segment at 266 to 288 threads the bilayer; it reads SALTTAVVGAIKNVSVAYIGILI. Over 289-292 the chain is Extracellular; the sequence is GGDY. A helical membrane pass occupies residues 293-315; it reads IFSLLNFVGLNICMAGGLRYSFL. The Cytoplasmic portion of the chain corresponds to 316–337; it reads TLSSQLKPKPVGEENICLDLKS.

The protein belongs to the TPT transporter family. SLC35D subfamily. Highly expressed in heart, kidney, small intestine, placenta, lung and peripheral blood leukocyte. Weakly expressed in skeletal muscle and spleen. Not expressed in brain, colon and thymus.

The protein resides in the golgi apparatus membrane. The enzyme catalyses UMP(out) + UDP-N-acetyl-alpha-D-glucosamine(in) = UMP(in) + UDP-N-acetyl-alpha-D-glucosamine(out). The catalysed reaction is UMP(out) + UDP-alpha-D-glucose(in) = UMP(in) + UDP-alpha-D-glucose(out). Its function is as follows. Nucleotide sugar antiporter transporting UDP-N-acetylglucosamine (UDP-GlcNAc) and UDP-glucose (UDP-Glc) from the cytosol into the lumen of the Golgi in exchange of UMP. By supplying UDP-N-acetylglucosamine, a donor substrate to heparan sulfate synthases, probably takes part in the synthesis of these glycoconjugates. This is Nucleotide sugar transporter SLC35D2 from Homo sapiens (Human).